Consider the following 455-residue polypeptide: Catalase-like protein (455 aa).

The disordered stretch occupies residues 1–25; that stretch reads MSQQDKKLTGVFGHPVSDRENSMTA.

Belongs to the catalase family.

Catalytically inactive. The polypeptide is Catalase-like protein (katB) (Staphylococcus aureus).